Reading from the N-terminus, the 276-residue chain is 2-dehydro-3-deoxyphosphooctonate aldolase (276 aa).

This sequence belongs to the KdsA family.

It localises to the cytoplasm. The catalysed reaction is D-arabinose 5-phosphate + phosphoenolpyruvate + H2O = 3-deoxy-alpha-D-manno-2-octulosonate-8-phosphate + phosphate. The protein operates within carbohydrate biosynthesis; 3-deoxy-D-manno-octulosonate biosynthesis; 3-deoxy-D-manno-octulosonate from D-ribulose 5-phosphate: step 2/3. It functions in the pathway bacterial outer membrane biogenesis; lipopolysaccharide biosynthesis. The protein is 2-dehydro-3-deoxyphosphooctonate aldolase of Helicobacter acinonychis (strain Sheeba).